A 349-amino-acid chain; its full sequence is Phosphoribosylformylglycinamidine cyclo-ligase (349 aa).

It belongs to the AIR synthase family.

The protein localises to the cytoplasm. The catalysed reaction is 2-formamido-N(1)-(5-O-phospho-beta-D-ribosyl)acetamidine + ATP = 5-amino-1-(5-phospho-beta-D-ribosyl)imidazole + ADP + phosphate + H(+). Its pathway is purine metabolism; IMP biosynthesis via de novo pathway; 5-amino-1-(5-phospho-D-ribosyl)imidazole from N(2)-formyl-N(1)-(5-phospho-D-ribosyl)glycinamide: step 2/2. The chain is Phosphoribosylformylglycinamidine cyclo-ligase from Bordetella petrii (strain ATCC BAA-461 / DSM 12804 / CCUG 43448).